A 298-amino-acid polypeptide reads, in one-letter code: Transcription factor RAX2 (298 aa).

HTH myb-type domains are found at residues 9 to 62 (KANV…LNYL) and 63 to 117 (RPNI…KKKL). 2 DNA-binding regions (H-T-H motif) span residues 38–62 (WIAL…LNYL) and 90–113 (WSVI…NTKL).

Ubiquitous, with higher levels in roots, flowers, and shoot tips. Found in all cells of the shoot tips.

The protein localises to the nucleus. Transcription activator. Positively regulates axillary meristems (AMs) formation and development, especially during inflorescence. This is Transcription factor RAX2 (RAX2) from Arabidopsis thaliana (Mouse-ear cress).